The sequence spans 454 residues: MSSGAPQKSSPMASGAEETPGFLDTLLQDFPALLNPEDPLPWKAPGTVLSQEEVEGELAELAMGFLGSRKAPPPLAAALAHEAVSQLLQTDLSEFRKLPREEEEEEEDDDEEEKAPVTLLDAQSLAQSFFNRLWEVAGQWQKQVPLAARASQRQWLVSIHAIRNTRRKMEDRHVSLPSFNQLFGLSDPVNRAYFAVFDGHGGVDAARYAAVHVHTNAARQPELPTDPEGALREAFRRTDQMFLRKAKRERLQSGTTGVCALIAGATLHVAWLGDSQVILVQQGQVVKLMEPHRPERQDEKARIEALGGFVSHMDCWRVNGTLAVSRAIGDVFQKPYVSGEADAASRALTGSEDYLLLACDGFFDVVPHQEVVGLVQSHLTRQQGSGLRVAEELVAAARERGSHDNITVMVVFLRDPQELLEGGNQGEGDPQAEGRRQDLPSSLPEPETQAPPRS.

The segment covering 1–12 (MSSGAPQKSSPM) has biased composition (polar residues). A disordered region spans residues 1 to 28 (MSSGAPQKSSPMASGAEETPGFLDTLLQ). One can recognise a PPM-type phosphatase domain in the interval 156–413 (LVSIHAIRNT…DNITVMVVFL (258 aa)). Residues aspartate 198, glycine 199, aspartate 360, and aspartate 404 each coordinate Mn(2+). The tract at residues 419 to 454 (LLEGGNQGEGDPQAEGRRQDLPSSLPEPETQAPPRS) is disordered. Serine 454 carries the post-translational modification Phosphoserine.

This sequence belongs to the PP2C family. Associates with FEM1B. The cofactor is Mg(2+). Requires Mn(2+) as cofactor.

The catalysed reaction is O-phospho-L-seryl-[protein] + H2O = L-seryl-[protein] + phosphate. The enzyme catalyses O-phospho-L-threonyl-[protein] + H2O = L-threonyl-[protein] + phosphate. Functionally, dephosphorylates and concomitantly deactivates CaM-kinase II activated upon autophosphorylation, and CaM-kinases IV and I activated upon phosphorylation by CaM-kinase kinase. Promotes apoptosis. The sequence is that of Protein phosphatase 1F (PPM1F) from Homo sapiens (Human).